Reading from the N-terminus, the 466-residue chain is Myocardial zonula adherens protein (466 aa).

A compositionally biased stretch (polar residues) spans methionine 1 to leucine 10. Residues methionine 1–glycine 20 form the signal peptide. A disordered region spans residues methionine 1–serine 23. Coiled-coil stretches lie at residues glutamine 96–glutamine 142 and leucine 174–lysine 418. Residues arginine 424 to glutamate 425 carry the Required for DYNLL1-binding motif.

The protein belongs to the MYZAP family. In terms of assembly, interacts with DSP, MPRIP and TJP1/ZO1. Interaction with MPRIP inhibits the activation of transcription factor SRF. Interacts with GRIN1. Interacts with DYNLL1. In terms of tissue distribution, detected in heart, liver, skeletal muscle, placenta, small intestine, lung, prostate and testis. Expressed in arrector pili muscle (at protein level).

It localises to the cytoplasm. Its subcellular location is the cytoskeleton. The protein localises to the cell membrane. The protein resides in the myofibril. It is found in the sarcomere. It localises to the i band. Its subcellular location is the z line. The protein localises to the cell junction. Its function is as follows. Plays a role in cellular signaling via Rho-related GTP-binding proteins and subsequent activation of transcription factor SRF. Targets TJP1 to cell junctions. In cortical neurons, may play a role in glutaminergic signal transduction through interaction with the NMDA receptor subunit GRIN1. This is Myocardial zonula adherens protein (MYZAP) from Homo sapiens (Human).